The chain runs to 423 residues: D-tagatose-1,6-bisphosphate aldolase subunit GatZ (423 aa).

This sequence belongs to the GatZ/KbaZ family. GatZ subfamily. Forms a complex with GatY.

The protein operates within carbohydrate metabolism; D-tagatose 6-phosphate degradation; D-glyceraldehyde 3-phosphate and glycerone phosphate from D-tagatose 6-phosphate: step 2/2. Functionally, component of the tagatose-1,6-bisphosphate aldolase GatYZ that is required for full activity and stability of the Y subunit. Could have a chaperone-like function for the proper and stable folding of GatY. When expressed alone, GatZ does not show any aldolase activity. Is involved in the catabolism of galactitol. This Salmonella newport (strain SL254) protein is D-tagatose-1,6-bisphosphate aldolase subunit GatZ.